The primary structure comprises 570 residues: Sulfite reductase [NADPH] hemoprotein beta-component (570 aa).

Residues Cys434, Cys440, Cys479, and Cys483 each coordinate [4Fe-4S] cluster. Cys483 contacts siroheme.

This sequence belongs to the nitrite and sulfite reductase 4Fe-4S domain family. In terms of assembly, alpha(8)-beta(8). The alpha component is a flavoprotein, the beta component is a hemoprotein. Requires siroheme as cofactor. [4Fe-4S] cluster serves as cofactor.

The enzyme catalyses hydrogen sulfide + 3 NADP(+) + 3 H2O = sulfite + 3 NADPH + 4 H(+). The protein operates within sulfur metabolism; hydrogen sulfide biosynthesis; hydrogen sulfide from sulfite (NADPH route): step 1/1. Functionally, component of the sulfite reductase complex that catalyzes the 6-electron reduction of sulfite to sulfide. This is one of several activities required for the biosynthesis of L-cysteine from sulfate. The polypeptide is Sulfite reductase [NADPH] hemoprotein beta-component (Enterobacter sp. (strain 638)).